A 337-amino-acid chain; its full sequence is Nicotinate-nucleotide--dimethylbenzimidazole phosphoribosyltransferase (337 aa).

The active-site Proton acceptor is Glu-305.

The protein belongs to the CobT family.

It carries out the reaction 5,6-dimethylbenzimidazole + nicotinate beta-D-ribonucleotide = alpha-ribazole 5'-phosphate + nicotinate + H(+). The protein operates within nucleoside biosynthesis; alpha-ribazole biosynthesis; alpha-ribazole from 5,6-dimethylbenzimidazole: step 1/2. Its function is as follows. Catalyzes the synthesis of alpha-ribazole-5'-phosphate from nicotinate mononucleotide (NAMN) and 5,6-dimethylbenzimidazole (DMB). The sequence is that of Nicotinate-nucleotide--dimethylbenzimidazole phosphoribosyltransferase from Jannaschia sp. (strain CCS1).